The following is an 860-amino-acid chain: Leucine--tRNA ligase (860 aa).

The 'HIGH' region motif lies at 42 to 52; sequence PYPSGRLHMGH. The 'KMSKS' region signature appears at 619-623; sequence KMSKS. ATP is bound at residue K622.

The protein belongs to the class-I aminoacyl-tRNA synthetase family.

The protein localises to the cytoplasm. The catalysed reaction is tRNA(Leu) + L-leucine + ATP = L-leucyl-tRNA(Leu) + AMP + diphosphate. The protein is Leucine--tRNA ligase of Escherichia coli O6:K15:H31 (strain 536 / UPEC).